The following is a 238-amino-acid chain: tRNA (guanine-N(1)-)-methyltransferase (238 aa).

S-adenosyl-L-methionine contacts are provided by residues glycine 110 and 129-134; that span reads LGDFIL.

This sequence belongs to the RNA methyltransferase TrmD family. As to quaternary structure, homodimer.

The protein localises to the cytoplasm. It catalyses the reaction guanosine(37) in tRNA + S-adenosyl-L-methionine = N(1)-methylguanosine(37) in tRNA + S-adenosyl-L-homocysteine + H(+). Functionally, specifically methylates guanosine-37 in various tRNAs. This chain is tRNA (guanine-N(1)-)-methyltransferase, found in Clostridium botulinum (strain Alaska E43 / Type E3).